The primary structure comprises 247 residues: Adenylyl-sulfate kinase (247 aa).

The segment at 1 to 24 (MSQSNSDDSASSSTQQAGDGQDDV) is disordered. ATP is bound at residue 55-62 (GLSGCGKS). Ser146 functions as the Phosphoserine intermediate in the catalytic mechanism.

The protein belongs to the APS kinase family.

The enzyme catalyses adenosine 5'-phosphosulfate + ATP = 3'-phosphoadenylyl sulfate + ADP + H(+). Its pathway is sulfur metabolism; hydrogen sulfide biosynthesis; sulfite from sulfate: step 2/3. In terms of biological role, catalyzes the synthesis of activated sulfate. This chain is Adenylyl-sulfate kinase, found in Rhodopirellula baltica (strain DSM 10527 / NCIMB 13988 / SH1).